Consider the following 370-residue polypeptide: Phosphoserine aminotransferase (370 aa).

Residue methionine 1 is modified to N-acetylmethionine. Residues histidine 44 and arginine 45 each coordinate O-phospho-L-serine. Position 51 is an N6-acetyllysine (lysine 51). Residues glycine 79, cysteine 80, and tryptophan 107 each contribute to the pyridoxal 5'-phosphate site. Residue lysine 127 is modified to N6-acetyllysine. Residues threonine 156, aspartate 176, and glutamine 199 each contribute to the pyridoxal 5'-phosphate site. Lysine 200 carries the post-translational modification N6-(pyridoxal phosphate)lysine. Pyridoxal 5'-phosphate is bound by residues asparagine 241 and threonine 242. N6-acetyllysine occurs at positions 269, 318, and 323. Serine 331 carries the phosphoserine modification. Lysine 333 is subject to N6-acetyllysine. O-phospho-L-serine-binding residues include histidine 335, arginine 336, and arginine 342.

It belongs to the class-V pyridoxal-phosphate-dependent aminotransferase family. SerC subfamily. In terms of assembly, homodimer. Requires pyridoxal 5'-phosphate as cofactor.

It catalyses the reaction O-phospho-L-serine + 2-oxoglutarate = 3-phosphooxypyruvate + L-glutamate. Its pathway is amino-acid biosynthesis; L-serine biosynthesis; L-serine from 3-phospho-D-glycerate: step 2/3. Its function is as follows. Involved in L-serine biosynthesis via the phosphorylated pathway, a three-step pathway converting the glycolytic intermediate 3-phospho-D-glycerate into L-serine. Catalyzes the second step, that is the pyridoxal 5'-phosphate-dependent transamination of 3-phosphohydroxypyruvate and L-glutamate to O-phosphoserine (OPS) and alpha-ketoglutarate. The protein is Phosphoserine aminotransferase (PSAT1) of Oryctolagus cuniculus (Rabbit).